The sequence spans 426 residues: Serine--tRNA ligase (426 aa).

230–232 (TAE) is a binding site for L-serine. Residue 261–263 (RSE) coordinates ATP. An L-serine-binding site is contributed by E284. 348–351 (EISS) is an ATP binding site. S384 lines the L-serine pocket.

Belongs to the class-II aminoacyl-tRNA synthetase family. Type-1 seryl-tRNA synthetase subfamily. In terms of assembly, homodimer. The tRNA molecule binds across the dimer.

The protein resides in the cytoplasm. It carries out the reaction tRNA(Ser) + L-serine + ATP = L-seryl-tRNA(Ser) + AMP + diphosphate + H(+). It catalyses the reaction tRNA(Sec) + L-serine + ATP = L-seryl-tRNA(Sec) + AMP + diphosphate + H(+). Its pathway is aminoacyl-tRNA biosynthesis; selenocysteinyl-tRNA(Sec) biosynthesis; L-seryl-tRNA(Sec) from L-serine and tRNA(Sec): step 1/1. Functionally, catalyzes the attachment of serine to tRNA(Ser). Is also able to aminoacylate tRNA(Sec) with serine, to form the misacylated tRNA L-seryl-tRNA(Sec), which will be further converted into selenocysteinyl-tRNA(Sec). This Novosphingobium aromaticivorans (strain ATCC 700278 / DSM 12444 / CCUG 56034 / CIP 105152 / NBRC 16084 / F199) protein is Serine--tRNA ligase.